The primary structure comprises 142 residues: Hemoglobin subunit alpha-A (142 aa).

Residues 2 to 142 (VLSAADKTNV…VGAVLTAKYR (141 aa)) enclose the Globin domain. O2 is bound at residue His59. Residue His88 participates in heme b binding.

This sequence belongs to the globin family. Heterotetramer of two alpha chains and two beta chains. Red blood cells.

Functionally, involved in oxygen transport from the lung to the various peripheral tissues. The chain is Hemoglobin subunit alpha-A (HBAA) from Anas platyrhynchos platyrhynchos (Northern mallard).